The sequence spans 458 residues: UDP-N-acetylmuramate--L-alanine ligase (458 aa).

118–124 (GTHGKTT) lines the ATP pocket.

It belongs to the MurCDEF family.

The protein resides in the cytoplasm. The enzyme catalyses UDP-N-acetyl-alpha-D-muramate + L-alanine + ATP = UDP-N-acetyl-alpha-D-muramoyl-L-alanine + ADP + phosphate + H(+). Its pathway is cell wall biogenesis; peptidoglycan biosynthesis. Its function is as follows. Cell wall formation. In Clostridium botulinum (strain Langeland / NCTC 10281 / Type F), this protein is UDP-N-acetylmuramate--L-alanine ligase.